The primary structure comprises 123 residues: Protein Wnt-3a (123 aa).

The O-palmitoleoyl serine moiety is linked to residue Ser1. The cysteines at positions 89 and 104 are disulfide-linked. Asn90 carries an N-linked (GlcNAc...) asparagine glycan.

Belongs to the Wnt family. Post-translationally, disulfide bonds have critical and distinct roles in secretion and activity. Loss of each conserved cysteine results in high molecular weight oxidized Wnt oligomers, which are formed through inter-Wnt disulfide bonding. Palmitoleoylation is required for efficient binding to frizzled receptors. Depalmitoleoylation leads to Wnt signaling pathway inhibition.

It localises to the secreted. Its subcellular location is the extracellular space. The protein localises to the extracellular matrix. Its function is as follows. Ligand for members of the frizzled family of seven transmembrane receptors. Functions in the canonical Wnt signaling pathway that results in activation of transcription factors of the TCF/LEF family. Required for normal embryonic mesoderm development and formation of caudal somites. Required for normal morphogenesis of the developing neural tube. This chain is Protein Wnt-3a (WNT-3A), found in Plethodon jordani (Red-cheeked salamander).